The sequence spans 266 residues: tRNA dimethylallyltransferase (266 aa).

Belongs to the IPP transferase family. As to quaternary structure, monomer. The cofactor is Mg(2+).

The catalysed reaction is adenosine(37) in tRNA + dimethylallyl diphosphate = N(6)-dimethylallyladenosine(37) in tRNA + diphosphate. In terms of biological role, catalyzes the transfer of a dimethylallyl group onto the adenine at position 37 in tRNAs that read codons beginning with uridine, leading to the formation of N6-(dimethylallyl)adenosine (i(6)A). This is tRNA dimethylallyltransferase (miaA) from Helicobacter acinonychis (strain Sheeba).